Consider the following 1378-residue polypeptide: DNA-directed RNA polymerase subunit beta' (1378 aa).

Cys69, Cys71, Cys84, and Cys87 together coordinate Zn(2+). Mg(2+) contacts are provided by Asp460, Asp462, and Asp464. Zn(2+) is bound by residues Cys808, Cys882, Cys889, and Cys892.

This sequence belongs to the RNA polymerase beta' chain family. In terms of assembly, the RNAP catalytic core consists of 2 alpha, 1 beta, 1 beta' and 1 omega subunit. When a sigma factor is associated with the core the holoenzyme is formed, which can initiate transcription. It depends on Mg(2+) as a cofactor. Zn(2+) serves as cofactor.

It carries out the reaction RNA(n) + a ribonucleoside 5'-triphosphate = RNA(n+1) + diphosphate. Functionally, DNA-dependent RNA polymerase catalyzes the transcription of DNA into RNA using the four ribonucleoside triphosphates as substrates. The polypeptide is DNA-directed RNA polymerase subunit beta' (Rickettsia canadensis (strain McKiel)).